A 736-amino-acid polypeptide reads, in one-letter code: ATP-dependent zinc metalloprotease FtsH (736 aa).

Disordered stretches follow at residues methionine 1 to arginine 39 and glutamine 57 to methionine 83. At methionine 1–lysine 87 the chain is on the cytoplasmic side. The segment covering glutamine 57–glycine 73 has biased composition (polar residues). Residues alanine 88–proline 108 traverse the membrane as a helical segment. Topologically, residues aspartate 109 to tryptophan 205 are periplasmic. Residues alanine 206–phenylalanine 226 traverse the membrane as a helical segment. Over arginine 227–serine 736 the chain is Cytoplasmic. ATP is bound at residue glycine 301–threonine 308. Histidine 522 provides a ligand contact to Zn(2+). Glutamate 523 is a catalytic residue. Zn(2+) contacts are provided by histidine 526 and aspartate 598. The segment at proline 706–serine 736 is disordered.

The protein in the central section; belongs to the AAA ATPase family. In the C-terminal section; belongs to the peptidase M41 family. In terms of assembly, homohexamer. Zn(2+) serves as cofactor.

The protein localises to the cell inner membrane. Its function is as follows. Acts as a processive, ATP-dependent zinc metallopeptidase for both cytoplasmic and membrane proteins. Plays a role in the quality control of integral membrane proteins. This chain is ATP-dependent zinc metalloprotease FtsH, found in Syntrophus aciditrophicus (strain SB).